The primary structure comprises 232 residues: GFP-like non-fluorescent chromoprotein FP595 (232 aa).

Residues Met-63–Gly-65 constitute a cross-link (2-iminomethyl-5-imidazolinone (Met-Gly)). Tyr-64 carries the (E)-2,3-didehydrotyrosine modification.

It belongs to the GFP family. Contains a chromophore consisting of modified amino acid residues. The chromophore is formed by autocatalytic backbone condensation between Xaa-N and Gly-(N+2), oxidation of Tyr-(N+1) to didehydrotyrosine, and formation of a double bond to the alpha-amino nitrogen of residue Tyr-(N+1). Maturation of the chromophore requires nothing other than molecular oxygen. As to expression, tentacle tips.

Its function is as follows. Pigment protein that is intensely purple in color. The protein is GFP-like non-fluorescent chromoprotein FP595 of Anemonia sulcata (Mediterranean snakelocks sea anemone).